The chain runs to 670 residues: ATP synthase subunit alpha 2 (670 aa).

180–187 is a binding site for ATP; it reads GDRATGKT. The disordered stretch occupies residues 527-670; the sequence is AEDAAGDIGG…DAEAEARHKR (144 aa). Positions 543 to 588 are enriched in basic and acidic residues; the sequence is ARGDADRDADHGANREVSREVSPEASREVSREVSREVSHEADRDAA. The segment covering 589–599 has biased composition (low complexity); sequence ADAARVAGRAP. Over residues 621–639 the composition is skewed to basic and acidic residues; it reads ADGDRASASRPRPDARGDA. Low complexity predominate over residues 640–661; the sequence is ARTAPSPQGGAEVNVNAAANVD.

The protein belongs to the ATPase alpha/beta chains family. In terms of assembly, F-type ATPases have 2 components, CF(1) - the catalytic core - and CF(0) - the membrane proton channel. CF(1) has five subunits: alpha(3), beta(3), gamma(1), delta(1), epsilon(1). CF(0) has three main subunits: a(1), b(2) and c(9-12). The alpha and beta chains form an alternating ring which encloses part of the gamma chain. CF(1) is attached to CF(0) by a central stalk formed by the gamma and epsilon chains, while a peripheral stalk is formed by the delta and b chains.

It localises to the cell inner membrane. The enzyme catalyses ATP + H2O + 4 H(+)(in) = ADP + phosphate + 5 H(+)(out). Functionally, produces ATP from ADP in the presence of a proton gradient across the membrane. The alpha chain is a regulatory subunit. This chain is ATP synthase subunit alpha 2, found in Burkholderia pseudomallei (strain 668).